A 158-amino-acid polypeptide reads, in one-letter code: uncharacterized protein (158 aa).

Residues 13–110 (ESVGRALELV…WGDEYLPRPE (98 aa)) form the HTH hxlR-type domain.

This is an uncharacterized protein from Mycobacterium tuberculosis (strain CDC 1551 / Oshkosh).